The primary structure comprises 313 residues: Proline iminopeptidase (313 aa).

The AB hydrolase-1 domain maps to Lys-35–Glu-298. Catalysis depends on Ser-110, which acts as the Nucleophile. Residue Asp-266 is part of the active site. The active-site Proton donor is the His-294.

The protein belongs to the peptidase S33 family.

It is found in the cytoplasm. The catalysed reaction is Release of N-terminal proline from a peptide.. In terms of biological role, specifically catalyzes the removal of N-terminal proline residues from peptides. The chain is Proline iminopeptidase (pip) from Xylella fastidiosa (strain Temecula1 / ATCC 700964).